The sequence spans 71 residues: Large ribosomal subunit protein bL31 (71 aa).

Positions 16, 18, 37, and 40 each coordinate Zn(2+).

It belongs to the bacterial ribosomal protein bL31 family. Type A subfamily. As to quaternary structure, part of the 50S ribosomal subunit. Requires Zn(2+) as cofactor.

Its function is as follows. Binds the 23S rRNA. The polypeptide is Large ribosomal subunit protein bL31 (Actinobacillus succinogenes (strain ATCC 55618 / DSM 22257 / CCUG 43843 / 130Z)).